Consider the following 140-residue polypeptide: Ribonuclease P protein subunit p20 (140 aa).

It belongs to the histone-like Alba family. As to quaternary structure, component of nuclear RNase P and RNase MRP complexes. RNase P consists of a catalytic RNA moiety and 10 different protein chains; POP1, POP4, POP5, POP7, RPP14, RPP21, RPP25, RPP30, RPP38 and RPP40. Within the RNase P complex, POP1, POP7 and RPP25 form the 'finger' subcomplex, POP5, RPP14, RPP40 and homodimeric RPP30 form the 'palm' subcomplex, and RPP21, POP4 and RPP38 form the 'wrist' subcomplex. All subunits of the RNase P complex interact with the catalytic RNA. Several subunits of RNase P are also part of the RNase MRP complex. RNase MRP consists of a catalytic RNA moiety and about 8 protein subunits; POP1, POP7, RPP25, RPP30, RPP38, RPP40 and possibly also POP4 and POP5. Interacts with SMN1. POP7 forms a heterodimer with RPP25 that binds to the P3 stem loop of the catalytic RNA.

It localises to the nucleus. It is found in the nucleolus. The protein resides in the cytoplasm. Its subcellular location is the cytoplasmic granule. Its function is as follows. Component of ribonuclease P, a ribonucleoprotein complex that generates mature tRNA molecules by cleaving their 5'-ends. Also a component of the MRP ribonuclease complex, which cleaves pre-rRNA sequences. The sequence is that of Ribonuclease P protein subunit p20 (Pop7) from Mus musculus (Mouse).